The chain runs to 434 residues: Maltoporin (434 aa).

Positions 1–25 (MKMKAKWLPIAAAVTAALASQAAFA) are cleaved as a signal peptide.

The protein belongs to the porin LamB (TC 1.B.3) family. Homotrimer formed of three 18-stranded antiparallel beta-barrels, containing three independent channels.

Its subcellular location is the cell outer membrane. The enzyme catalyses beta-maltose(in) = beta-maltose(out). In terms of biological role, involved in the transport of maltose and maltodextrins. This is Maltoporin from Aeromonas hydrophila.